We begin with the raw amino-acid sequence, 303 residues long: Elongation factor Ts (303 aa).

An involved in Mg(2+) ion dislocation from EF-Tu region spans residues Thr-80 to Val-83.

This sequence belongs to the EF-Ts family.

It localises to the cytoplasm. Functionally, associates with the EF-Tu.GDP complex and induces the exchange of GDP to GTP. It remains bound to the aminoacyl-tRNA.EF-Tu.GTP complex up to the GTP hydrolysis stage on the ribosome. The sequence is that of Elongation factor Ts from Clostridium botulinum (strain Eklund 17B / Type B).